Reading from the N-terminus, the 265-residue chain is MNDMTAMDSTVETQRTKIAAKGVNVYYGDSHAIKDVNVEIEDKTVTAFIGPSGCGKSTFLRCLNRMNDTIDICRVTGDILLEGEDIYDKRVDPVQLRAQVGMVFQKPNPFPKSIYDNVAYGPRIHGLAKNKAELDEIVEKSLRRGAIWDEVKDRLHAPGTGLSGGQQQRLCIARAVATEPEVLLMDEPCSALDPIATAQVEELIDELRENYSVVIVTHSMQQAARVSQKTAFFHLGNLVEFGPTGQIFTNPEDPRTESYITGRIG.

The 243-residue stretch at 18–260 (IAAKGVNVYY…PEDPRTESYI (243 aa)) folds into the ABC transporter domain. 50–57 (GPSGCGKS) serves as a coordination point for ATP.

The protein belongs to the ABC transporter superfamily. Phosphate importer (TC 3.A.1.7) family. In terms of assembly, the complex is composed of two ATP-binding proteins (PstB), two transmembrane proteins (PstC and PstA) and a solute-binding protein (PstS).

The protein localises to the cell inner membrane. It catalyses the reaction phosphate(out) + ATP + H2O = ADP + 2 phosphate(in) + H(+). Part of the ABC transporter complex PstSACB involved in phosphate import. Responsible for energy coupling to the transport system. The chain is Phosphate import ATP-binding protein PstB from Ruegeria sp. (strain TM1040) (Silicibacter sp.).